Reading from the N-terminus, the 184-residue chain is MLSEESGYLVQVELDVQDCFFESFPEAAQASGYMDSQVSPATWQDWFHRWLEILDSSLPPAPSYEIGLRLTDDTEIQAINAQYRQQNKPTDVLAFAALEVDLPQNPEMVAEPLYLGDIVVSINTAQRQAGQQEHSLSTELAWLTAHGLLHLLGWDHPDEESLIAMLQQQVVLLEAIGININVNY.

Zn(2+)-binding residues include H146, H150, and H156.

This sequence belongs to the endoribonuclease YbeY family. The cofactor is Zn(2+).

It is found in the cytoplasm. Functionally, single strand-specific metallo-endoribonuclease involved in late-stage 70S ribosome quality control and in maturation of the 3' terminus of the 16S rRNA. The sequence is that of Endoribonuclease YbeY from Nostoc sp. (strain PCC 7120 / SAG 25.82 / UTEX 2576).